The following is a 567-amino-acid chain: MGDLAMSVADIRMENEPDDLASDNVAEIDVSDEEIDADDLERRMWKDRVRLKRIKERQKAGSQGAQTKETPKKISDQAQRKKMSRAQDGILKYMLKLMEVCKVRGFVYGIIPEKGKPVSGSSDNIRAWWKEKVKFDKNGPAAIAKYEEECLAFGKSDGNRNSQFVLQDLQDATLGSLLSSLMQHCDPPQRKYPLEKGTPPPWWPTGNEEWWVKLGLPKSQSPPYRKPHDLKKMWKVGVLTAVINHMLPDIAKIKRHVRQSKCLQDKMTAKESAIWLAVLNQEESLIQQPSSDNGNSNVTETHRRGNNADRRKPVVNSDSDYDVDGTEEASGSVSSKDSRRNQIQKEQPTAISHSVRDQDKAEKHRRRKRPRIRSGTVNRQEEEQPEAQQRNILPDMNHVDAPLLEYNINGTHQEDDVVDPNIALGPEDNGLELVVPEFNNNYTYLPLVNEQTMMPVDERPMLYGPNPNQELQFGSGYNFYNPSAVFVHNQEDDILHTQIEMNTQAPPHNSGFEEAPGGVLQPLGLLGNEDGVTGSELPQYQSGILSPLTDLDFDYGGFGDDFSWFGA.

Positions asparagine 24–methionine 44 form a coiled coil. Disordered stretches follow at residues lysine 55–lysine 81 and isoleucine 286–leucine 393. A compositionally biased stretch (basic and acidic residues) spans glutamate 69–glutamine 79. Residues serine 162–glutamine 288 mediate DNA binding. Positions isoleucine 286–threonine 299 are enriched in polar residues. The span at glutamate 300–lysine 312 shows a compositional bias: basic and acidic residues. Basic residues predominate over residues lysine 363–isoleucine 372.

The protein belongs to the EIN3 family. As to quaternary structure, interacts with MYB72.

It is found in the nucleus. Probable transcription factor that may be involved in the ethylene response pathway. The protein is ETHYLENE INSENSITIVE 3-like 3 protein (EIL3) of Arabidopsis thaliana (Mouse-ear cress).